We begin with the raw amino-acid sequence, 497 residues long: D-gluconate dehydratase (497 aa).

Mg(2+) is bound at residue E303. H305 acts as the Proton donor in catalysis. Mg(2+)-binding residues include E329 and E355. The active-site Proton acceptor is the H405.

This sequence belongs to the mandelate racemase/muconate lactonizing enzyme family. GaD subfamily. It depends on Mg(2+) as a cofactor.

It catalyses the reaction D-gluconate = 2-dehydro-3-deoxy-D-gluconate + H2O. Its pathway is carbohydrate acid metabolism; D-gluconate degradation. Functionally, involved in the degradation of glucose via the Entner-Doudoroff pathway. Catalyzes the dehydration of gluconate to produce 2-keto-3-deoxygluconate (KDG). It is not able to use D-galactonate as substrate. In Thermoproteus tenax, this protein is D-gluconate dehydratase (gad).